A 152-amino-acid chain; its full sequence is Deoxyuridine 5'-triphosphate nucleotidohydrolase (152 aa).

Substrate-binding positions include 71 to 73 (RSG), Asn-84, 88 to 90 (LID), and Met-98.

This sequence belongs to the dUTPase family. Requires Mg(2+) as cofactor.

It carries out the reaction dUTP + H2O = dUMP + diphosphate + H(+). It participates in pyrimidine metabolism; dUMP biosynthesis; dUMP from dCTP (dUTP route): step 2/2. In terms of biological role, this enzyme is involved in nucleotide metabolism: it produces dUMP, the immediate precursor of thymidine nucleotides and it decreases the intracellular concentration of dUTP so that uracil cannot be incorporated into DNA. In Photorhabdus laumondii subsp. laumondii (strain DSM 15139 / CIP 105565 / TT01) (Photorhabdus luminescens subsp. laumondii), this protein is Deoxyuridine 5'-triphosphate nucleotidohydrolase.